Consider the following 52-residue polypeptide: Mitogenic lectin alpha chain (52 aa).

The protein belongs to the leguminous lectin family. As to quaternary structure, tetramer of two alpha and two beta chains.

The polypeptide is Mitogenic lectin alpha chain (Vicia sativa (Spring vetch)).